Here is a 116-residue protein sequence, read N- to C-terminus: NADPH-dependent 7-cyano-7-deazaguanine reductase (116 aa).

The active-site Thioimide intermediate is the C31. The active-site Proton donor is D38. Substrate-binding positions include 53–55 (IEL) and 72–73 (YE).

The protein belongs to the GTP cyclohydrolase I family. QueF type 1 subfamily.

The protein resides in the cytoplasm. The enzyme catalyses 7-aminomethyl-7-carbaguanine + 2 NADP(+) = 7-cyano-7-deazaguanine + 2 NADPH + 3 H(+). It participates in tRNA modification; tRNA-queuosine biosynthesis. Its function is as follows. Catalyzes the NADPH-dependent reduction of 7-cyano-7-deazaguanine (preQ0) to 7-aminomethyl-7-deazaguanine (preQ1). The chain is NADPH-dependent 7-cyano-7-deazaguanine reductase from Pelodictyon phaeoclathratiforme (strain DSM 5477 / BU-1).